The following is a 573-amino-acid chain: MAGSPGNELPLLQLQEVDSSKVGESGGSSGLLPTMYNGALPALSMESHAVCIPSPYTDSSHDYAALTFYSPPILSHGGPAVPESPAARQSLSPSLFWPAHGHHGHVSPLALHFQQPLVYREPAHSPWAEPKPLEHGQAQTSKLAGKRMAESEEGTSSVGGCFAGKGDMHFCAVCHDYASGYHYGVWSCEGCKAFFKRSIQGHNGYICPATNQCTIDKNRRKSCQACRLRKCYEVGMMKCGVRRERCTYRGARHRRMPHIRELAGTGGGARTQRRGEGVVPQTQEAQSSALTPEQLINRIIEAEPPEIYLMKELKKPFTEDSMMMSLTNLADKELVLMISWAKKIPGFVELDLSDQVHLLECCWLEVLMLGLMWRSVDHPGKLIFSPDLKLNRDEGSCVEGILEIFDMVLAATSRFRELKLQREEYVCLKAIILLNPNLCTTSSENREELESRNKLLHMLDSVTDALVWTIAKKGLTFQQQSARLAHLLMLLAHIRHLSNKGMEHLSNMKRKNVVPLYDLLLEMLDANTMHSSRMSASYSSQPSPWSQAAQSQPGPPPSCSGECPCPPKESSTI.

The tract at residues 15-170 is modulating; the sequence is QEVDSSKVGE…CFAGKGDMHF (156 aa). 2 consecutive NR C4-type zinc fingers follow at residues 171–191 and 207–231; these read CAVC…CEGC and CPAT…LRKC. The segment at residues 171–236 is a DNA-binding region (nuclear receptor); sequence CAVCHDYASG…RLRKCYEVGM (66 aa). Residues 291–527 enclose the NR LBD domain; that stretch reads TPEQLINRII…DLLLEMLDAN (237 aa). 2 stretches are compositionally biased toward low complexity: residues 534–552 and 559–573; these read MSAS…AQSQ and CSGE…SSTI. Residues 534-573 form a disordered region; it reads MSASYSSQPSPWSQAAQSQPGPPPSCSGECPCPPKESSTI.

The protein belongs to the nuclear hormone receptor family. NR3 subfamily. As to quaternary structure, binds DNA as a homodimer. Can form a heterodimer with ER-alpha. Liver.

Its subcellular location is the nucleus. In terms of biological role, binds estrogens with an affinity similar to that of ER-alpha, and activates expression of reporter genes containing estrogen response elements (ERE) in an estrogen-dependent manner. This Anguilla japonica (Japanese eel) protein is Estrogen receptor beta (esr2).